Here is a 468-residue protein sequence, read N- to C-terminus: Adenosylhomocysteinase (468 aa).

Positions 57, 132, and 194 each coordinate substrate. Residue 195-197 (TTT) participates in NAD(+) binding. Substrate contacts are provided by lysine 224 and aspartate 228. NAD(+) contacts are provided by residues asparagine 229, 258-263 (GFGDVG), glutamate 281, asparagine 316, 337-339 (IGH), and asparagine 382.

It belongs to the adenosylhomocysteinase family. It depends on NAD(+) as a cofactor.

It localises to the cytoplasm. The enzyme catalyses S-adenosyl-L-homocysteine + H2O = L-homocysteine + adenosine. It participates in amino-acid biosynthesis; L-homocysteine biosynthesis; L-homocysteine from S-adenosyl-L-homocysteine: step 1/1. Functionally, may play a key role in the regulation of the intracellular concentration of adenosylhomocysteine. This is Adenosylhomocysteinase from Methylobacterium sp. (strain 4-46).